The sequence spans 365 residues: Sulfate/thiosulfate import ATP-binding protein CysA (365 aa).

An ABC transporter domain is found at 3-237 (IEIANIKKSF…PATRFVLEFM (235 aa)). ATP is bound at residue 35–42 (GPSGSGKT).

This sequence belongs to the ABC transporter superfamily. Sulfate/tungstate importer (TC 3.A.1.6) family. The complex is composed of two ATP-binding proteins (CysA), two transmembrane proteins (CysT and CysW) and a solute-binding protein (CysP).

The protein resides in the cell inner membrane. It catalyses the reaction sulfate(out) + ATP + H2O = sulfate(in) + ADP + phosphate + H(+). The catalysed reaction is thiosulfate(out) + ATP + H2O = thiosulfate(in) + ADP + phosphate + H(+). Part of the ABC transporter complex CysAWTP involved in sulfate/thiosulfate import. Responsible for energy coupling to the transport system. The protein is Sulfate/thiosulfate import ATP-binding protein CysA of Escherichia coli (strain K12).